The primary structure comprises 219 residues: UPF0376 protein C36C5.12 (219 aa).

Residues 1 to 20 (MGRLDVKNSWIEFHQDEMTS) lie on the Cytoplasmic side of the membrane. The helical; Signal-anchor for type II membrane protein transmembrane segment at 21–43 (FLKLAIIGTVLLGVAHGANLTAA) threads the bilayer. Topologically, residues 44-219 (EKETYCELRS…VSKCDFSRLG (176 aa)) are extracellular. N-linked (GlcNAc...) asparagine glycosylation is found at asparagine 104 and asparagine 204.

Belongs to the UPF0376 family.

The protein localises to the membrane. The polypeptide is UPF0376 protein C36C5.12 (Caenorhabditis elegans).